Reading from the N-terminus, the 1158-residue chain is MQTTQSSCPGSPPDTEDGWEPILCRGEINFGGSGKKRGKFVKVPSSVAPSVLFELLLTEWHLPAPNLVVSLVGEERPLAMKSWLRDVLRKGLVKAAQSTGAWILTSALHVGLARHVGQAVRDHSLASTSTKIRVVAIGMASLDRILHRQLLDGVHQKEDTPIHYPADEGNIQGPLCPLDSNLSHFILVESGALGSGNDGLTELQLSLEKHISQQRTGYGGTSCIQIPVLCLLVNGDPNTLERISRAVEQAAPWLILAGSGGIADVLAALVSQPHLLVPQVAEKQFREKFPSECFSWEAIVHWTELLQNIAAHPHLLTVYDFEQEGSEDLDTVILKALVKACKSHSQEAQDYLDELKLAVAWDRVDIAKSEIFNGDVEWKSCDLEEVMTDALVSNKPDFVRLFVDSGADMAEFLTYGRLQQLYHSVSPKSLLFELLQRKHEEGRLTLAGLGAQQARELPIGLPAFSLHEVSRVLKDFLHDACRGFYQDGRRMEERGPPKRPAGQKWLPDLSRKSEDPWRDLFLWAVLQNRYEMATYFWAMGREGVAAALAACKIIKEMSHLEKEAEVARTMREAKYEQLALDLFSECYGNSEDRAFALLVRRNHSWSRTTCLHLATEADAKAFFAHDGVQAFLTKIWWGDMATGTPILRLLGAFTCPALIYTNLISFSEDAPQRMDLEDLQEPDSLDMEKSFLCSRGGQLEKLTEAPRAPGDLGPQAAFLLTRWRKFWGAPVTVFLGNVVMYFAFLFLFTYVLLVDFRPPPQGPSGSEVTLYFWVFTLVLEEIRQGFFTDEDTHLVKKFTLYVEDNWNKCDMVAIFLFIVGVTCRMVPSVFEAGRTVLAIDFMVFTLRLIHIFAIHKQLGPKIIIVERMMKDVFFFLFFLSVWLVAYGVTTQALLHPHDGRLEWIFRRVLYRPYLQIFGQIPLDEIDEARVNCSLHPLLLESSASCPNLYANWLVILLLVTFLLVTNVLLMNLLIAMFSYTFQVVQGNADMFWKFQRYHLIVEYHGRPALAPPFILLSHLSLVLKQVFRKEAQHKRQHLERDLPDPLDQKIITWETVQKENFLSTMEKRRRDSEGEVLRKTAHRVDLIAKYIGGLREQEKRIKCLESQANYCMLLLSSMTDTLAPGGTYSSSQNCGCRSQPASARDREYLESGLPPSDT.

At 1 to 729 (MQTTQSSCPG…LTRWRKFWGA (729 aa)) the chain is on the cytoplasmic side. Serine 129 carries the phosphoserine; by PKC modification. Ca(2+) contacts are provided by cysteine 341, aspartate 350, aspartate 353, and glutamate 354. The interval 488–507 (GRRMEERGPPKRPAGQKWLP) is disordered. Positions 552–572 (KIIKEMSHLEKEAEVARTMRE) form a coiled coil. The helical transmembrane segment at 730–754 (PVTVFLGNVVMYFAFLFLFTYVLLV) threads the bilayer. Residues 755–764 (DFRPPPQGPS) lie on the Extracellular side of the membrane. Residues 765–784 (GSEVTLYFWVFTLVLEEIRQ) form a helical membrane-spanning segment. Ca(2+) is bound by residues glutamate 781 and glutamine 784. The Cytoplasmic segment spans residues 785–805 (GFFTDEDTHLVKKFTLYVEDN). A helical transmembrane segment spans residues 806 to 824 (WNKCDMVAIFLFIVGVTCR). The Ca(2+) site is built by asparagine 807 and aspartate 810. Residues 825–831 (MVPSVFE) are Extracellular-facing. The helical transmembrane segment at 832 to 854 (AGRTVLAIDFMVFTLRLIHIFAI) threads the bilayer. Over 855-863 (HKQLGPKII) the chain is Cytoplasmic. A helical transmembrane segment spans residues 864–893 (IVERMMKDVFFFLFFLSVWLVAYGVTTQAL). Over 894–902 (LHPHDGRLE) the chain is Extracellular. The segment at residues 903–938 (WIFRRVLYRPYLQIFGQIPLDEIDEARVNCSLHPLL) is an intramembrane region (pore-forming). The Selectivity filter signature appears at 917-919 (FGQ). Residues 939-950 (LESSASCPNLYA) are Extracellular-facing. A helical membrane pass occupies residues 951-985 (NWLVILLLVTFLLVTNVLLMNLLIAMFSYTFQVVQ). Residues 986–1158 (GNADMFWKFQ…LESGLPPSDT (173 aa)) lie on the Cytoplasmic side of the membrane. Glutamate 1002 lines the Ca(2+) pocket. Residues 1127 to 1141 (TYSSSQNCGCRSQPA) show a composition bias toward polar residues. The segment at 1127-1158 (TYSSSQNCGCRSQPASARDREYLESGLPPSDT) is disordered.

Belongs to the transient receptor (TC 1.A.4) family. LTrpC subfamily. TRPM5 sub-subfamily. In terms of assembly, homotetramer. In terms of processing, multiple phosphorylation sites regulate the Gq/ TRPM5 modulation axis, with the Ser-129 playing a substantial role in this positive modulation. In terms of tissue distribution, strongly expressed in liver, heart, testis, brain and kidney. Detected in fetal liver, kidney, spleen, brain, heart and lung, and in adult skin, eyes, spleen, stomach, small intestine, colon, lung, bladder, pancreas and thymus. Biallelically expressed at all stages and tissues examined. Also expressed in subsets of taste receptor cells of the tongue, in olfactory sensory neurons of the main olfactory epithelium and in the vomeronasal organ.

The protein resides in the cell membrane. The enzyme catalyses Na(+)(in) = Na(+)(out). It carries out the reaction K(+)(in) = K(+)(out). Ca(2+)-activated cation channel. Displays voltage dependence modulation. Regulated by PI(4,5)P2 levels. PI(4,5)P 2 reverses the Ca(2+) -induced desensitization of channels. Inhibited by flufenamic acid with an IC(50) of 24.5 uM and spermine with an IC(50) of 37 uM. Is a highly temperature-sensitive, heat activated channel showing a steep increase of inward currents at temperatures between 15 and 35 degrees Celsius. Heat activation is due to a shift of the voltage-dependent activation curve to negative potentials. The channel is blocked by extracellular acidification. In terms of biological role, monovalent cation-selective ion channel activated by intracellular Ca(2+) in a voltage- and temperature-dependent manner. Mediates the transport of Na(+), K(+) and Cs(+) ions equally well. Activated directly by increase in intracellular Ca(2+), but is impermeable to it. The activation mechanism of TRPM5 involves a multistep process. TRPM5 activation involves ligand binding (i.e., tastant molecule, glucose stimulation) to Gq/G-protein coupled receptors (GPCR) and leads to the breakdown of phosphatidylinositol bisphosphate (PIP2) into diacylglycerol (DAG) and inositol trisphosphate (IP3), IP3 binds to its receptors in the endoplasmic reticulum and cause Ca(2+) release. Simultaneously with the intracellular Ca(2+) release, DAG activates the protein kinase C (PKC), which phosphorylates the TRPM5 channel. This phosphorylation combined with the bound Ca(2+), leads to a robust inward current allowing the entry of sodium ions (Na+) into the cell. This ion influx depolarizes the cell membrane, generating action potentials that propagate TRPM5 signals. Is a key player in sensing sweet, umami and bitter stimuli. May also be involved in sensing semiochemicals. Involved in insulin secretion by pancreatic beta cells. The sequence is that of Transient receptor potential cation channel subfamily M member 5 from Mus musculus (Mouse).